Consider the following 253-residue polypeptide: Probable transcriptional regulatory protein RBE_0568 (253 aa).

The interval 1–21 (MAGHSKFKNIQHRKGAQDKKR) is disordered.

This sequence belongs to the TACO1 family.

The protein localises to the cytoplasm. In Rickettsia bellii (strain RML369-C), this protein is Probable transcriptional regulatory protein RBE_0568.